A 78-amino-acid polypeptide reads, in one-letter code: Putative membrane protein insertion efficiency factor (78 aa).

It belongs to the UPF0161 family.

It localises to the cell membrane. Functionally, could be involved in insertion of integral membrane proteins into the membrane. In Limosilactobacillus reuteri (strain DSM 20016) (Lactobacillus reuteri), this protein is Putative membrane protein insertion efficiency factor.